Consider the following 318-residue polypeptide: MAGALRGPGDADWRAEIERRVRGEVLRDAPLAPRTAVRVGGPADLLVRPADPGALAALLRAVRELSVPLTILGGGANTLVADAGVRGVVLRLPQGFGEEARDGERLVLGAGAPTSRLWVRAHAAGLVGIEFVAGIPGTLGGAVAMNAGTKIGEMKDVVSAVELATADGAGFVPAASLGFAYRTCRLPAGAVITRVQLTLRPGDVAESERIMQADRDGRRRTQPLDRPTFGSTFTNPPGDFAGRLVEAVGLKGHRVGGATWSDVHANFVSNLGGATARDVLALMRLARTRVKQRFGISLETEVRLVGEFHAEDLEGLRA.

Residues 39–202 (VGGPADLLVR…TRVQLTLRPG (164 aa)) enclose the FAD-binding PCMH-type domain. Residue Arg-182 is part of the active site. The span at 214–223 (DRDGRRRTQP) shows a compositional bias: basic and acidic residues. Residues 214–235 (DRDGRRRTQPLDRPTFGSTFTN) form a disordered region. Ser-231 serves as the catalytic Proton donor. The active site involves Glu-301.

The protein belongs to the MurB family. FAD is required as a cofactor.

The protein localises to the cytoplasm. The enzyme catalyses UDP-N-acetyl-alpha-D-muramate + NADP(+) = UDP-N-acetyl-3-O-(1-carboxyvinyl)-alpha-D-glucosamine + NADPH + H(+). It participates in cell wall biogenesis; peptidoglycan biosynthesis. Its function is as follows. Cell wall formation. This chain is UDP-N-acetylenolpyruvoylglucosamine reductase, found in Anaeromyxobacter sp. (strain Fw109-5).